A 473-amino-acid chain; its full sequence is Mogroside IIIx synthase (473 aa).

The active-site Proton acceptor is His-43. The active-site Charge relay is Asp-142. The UDP-alpha-D-glucose site is built by Ser-293, Gln-356, Trp-374, Asn-375, Ser-376, Glu-379, Asp-395, and Gln-396.

Belongs to the UDP-glycosyltransferase family. As to expression, highly expressed in mature fruits.

The enzyme catalyses mogroside IIE + UDP-alpha-D-glucose = mogroside IIIX + UDP + H(+). The catalysed reaction is mogroside III + UDP-alpha-D-glucose = mogroside IV + UDP + H(+). It carries out the reaction mogroside III + UDP-alpha-D-glucose = siamenoside I + UDP + H(+). It catalyses the reaction mogroside IIIX + UDP-alpha-D-glucose = mogroside IVA + UDP + H(+). The enzyme catalyses mogroside IIIX + UDP-alpha-D-glucose = siamenoside I + UDP + H(+). The catalysed reaction is mogroside IV + UDP-alpha-D-glucose = mogroside V + UDP + H(+). It carries out the reaction siamenoside I + UDP-alpha-D-glucose = mogroside V + UDP + H(+). It catalyses the reaction mogroside V + UDP-alpha-D-glucose = mogroside VI + UDP + H(+). It participates in secondary metabolite biosynthesis; terpenoid biosynthesis. Activity is increased by Mg(2+). UDP-glycosyltransferase involved in the biosynthesis of cucurbitacin and mogroside tetracyclic triterpene natural products (e.g. siamenoside I and mogrosides IV, V and VI). Cucurbitacins have cytotoxic properties and exhibit deterrent taste as a defense barrier against herbivores. Mogrosides are nonsugar highly oxygenated compounds used as high-intensity zero-calorie sweeteners; they also possess pharmacological properties such as regulating immunity, lowering blood sugar and lipid levels, protecting the liver, and acting as antioxidants and antitumor agents. In terms of biological role, catalyzes the branched glucosylations of mogroside II-E, mogroside III, mogroside IIIx, mogroside IV, mogroside IV-A, siamenoside I and mogroside V, ending in the production of mogroside VI. Functionally, catalyzes the beta(1-6) branched glucosylations of mogroside II-E to produce mogroside IIIx by forming a beta(1-6) glycosidic bond with the 6-hydroxyl of glucose 1-C24; a subsequent glycosylation at glucose 1-C3 leads to the formation of mogroside IV-A with beta(1-6) glycosidic bond. Can also use mogroside III-E, mogroside III-A, mogroside IV-E and mogroside IV-A as substrates. The protein is Mogroside IIIx synthase of Siraitia grosvenorii (Monk's fruit).